The chain runs to 106 residues: V-type proton ATPase subunit G2 (106 aa).

Residue M1 is modified to N-acetylmethionine. Residues 31–67 (LKQAKEEAETEVAEHKTSTEQGFQRKLEATSGDSGAN) form a disordered region. The segment covering 33–58 (QAKEEAETEVAEHKTSTEQGFQRKLE) has biased composition (basic and acidic residues).

It belongs to the V-ATPase G subunit family. As to quaternary structure, V-ATPase is a heteromultimeric enzyme composed of a peripheral catalytic V1 complex (components A to H) attached to an integral membrane V0 proton pore complex (components: a, c, c'', d and e).

The protein localises to the vacuole membrane. In terms of biological role, catalytic subunit of the peripheral V1 complex of vacuolar ATPase (V-ATPase). V-ATPase is responsible for acidifying a variety of intracellular compartments in eukaryotic cells. The polypeptide is V-type proton ATPase subunit G2 (VHA-G2) (Arabidopsis thaliana (Mouse-ear cress)).